We begin with the raw amino-acid sequence, 508 residues long: Probable cytochrome P450 6d5 (508 aa).

Heme is bound at residue Cys453.

Belongs to the cytochrome P450 family. It depends on heme as a cofactor.

The protein localises to the endoplasmic reticulum membrane. It localises to the microsome membrane. In terms of biological role, may be involved in the metabolism of insect hormones and in the breakdown of synthetic insecticides. The protein is Probable cytochrome P450 6d5 (Cyp6d5) of Drosophila melanogaster (Fruit fly).